Consider the following 628-residue polypeptide: Chaperone protein DnaK (628 aa).

Thr197 carries the phosphothreonine; by autocatalysis modification. The segment at 597 to 628 is disordered; the sequence is EQMYKGEQGAQGGAADTSKKKSDDDVIDAEIE.

The protein belongs to the heat shock protein 70 family.

Acts as a chaperone. The chain is Chaperone protein DnaK from Sulfurimonas denitrificans (strain ATCC 33889 / DSM 1251) (Thiomicrospira denitrificans (strain ATCC 33889 / DSM 1251)).